The chain runs to 605 residues: Probable potassium transport system protein Kup (605 aa).

Transmembrane regions (helical) follow at residues 18-38, 46-66, 97-117, 138-158, 169-189, 204-224, 247-267, 287-307, 339-359, 368-388, 395-415, and 418-438; these read GLVFGDIGTSPIYTLTVIIAL, ILGIISLIVWTLIILVHLEYA, MAFVTFLTYLGVALLMGDGVI, GLSQNTLILIAGTIALFLFVF, AFGPIMVLWFAALALSGAISV, AISFLMHNGLPGFFVLSEVIL, AWYFVFVALVINYLGQGAFII, FYIPFLILTILATIIASQALI, IYIGSVNWLLLCLVILIMLVF, AYGFAVTGTMVITGIMMTMIF, WKVPLALFVTLVDVVFLVSNC, and LPHGGYWSLILASVPLAVILI.

The protein belongs to the HAK/KUP transporter (TC 2.A.72) family.

The protein localises to the cell inner membrane. It carries out the reaction K(+)(in) + H(+)(in) = K(+)(out) + H(+)(out). Its function is as follows. Transport of potassium into the cell. Likely operates as a K(+):H(+) symporter. The sequence is that of Probable potassium transport system protein Kup from Pelobacter propionicus (strain DSM 2379 / NBRC 103807 / OttBd1).